We begin with the raw amino-acid sequence, 243 residues long: Adenosylcobinamide-GDP ribazoletransferase (243 aa).

5 helical membrane passes run Leu-31–Leu-51, Leu-57–Leu-77, Ile-109–Ile-129, Ile-135–Thr-155, and Val-188–Trp-208.

Belongs to the CobS family. Requires Mg(2+) as cofactor.

The protein resides in the cell inner membrane. It carries out the reaction alpha-ribazole + adenosylcob(III)inamide-GDP = adenosylcob(III)alamin + GMP + H(+). The enzyme catalyses alpha-ribazole 5'-phosphate + adenosylcob(III)inamide-GDP = adenosylcob(III)alamin 5'-phosphate + GMP + H(+). Its pathway is cofactor biosynthesis; adenosylcobalamin biosynthesis; adenosylcobalamin from cob(II)yrinate a,c-diamide: step 7/7. In terms of biological role, joins adenosylcobinamide-GDP and alpha-ribazole to generate adenosylcobalamin (Ado-cobalamin). Also synthesizes adenosylcobalamin 5'-phosphate from adenosylcobinamide-GDP and alpha-ribazole 5'-phosphate. This Pseudomonas savastanoi pv. phaseolicola (strain 1448A / Race 6) (Pseudomonas syringae pv. phaseolicola (strain 1448A / Race 6)) protein is Adenosylcobinamide-GDP ribazoletransferase.